We begin with the raw amino-acid sequence, 262 residues long: Tryptophan synthase alpha chain (262 aa).

Catalysis depends on proton acceptor residues glutamate 52 and aspartate 63.

It belongs to the TrpA family. Tetramer of two alpha and two beta chains.

The enzyme catalyses (1S,2R)-1-C-(indol-3-yl)glycerol 3-phosphate + L-serine = D-glyceraldehyde 3-phosphate + L-tryptophan + H2O. Its pathway is amino-acid biosynthesis; L-tryptophan biosynthesis; L-tryptophan from chorismate: step 5/5. Functionally, the alpha subunit is responsible for the aldol cleavage of indoleglycerol phosphate to indole and glyceraldehyde 3-phosphate. The chain is Tryptophan synthase alpha chain from Mycobacteroides abscessus (strain ATCC 19977 / DSM 44196 / CCUG 20993 / CIP 104536 / JCM 13569 / NCTC 13031 / TMC 1543 / L948) (Mycobacterium abscessus).